Consider the following 425-residue polypeptide: UPF0597 protein Moth_1414 (425 aa).

This sequence belongs to the UPF0597 family.

The polypeptide is UPF0597 protein Moth_1414 (Moorella thermoacetica (strain ATCC 39073 / JCM 9320)).